Consider the following 77-residue polypeptide: uncharacterized protein (77 aa).

An HTH cro/C1-type domain is found at 11-65; it reads FARLRREKGLTQEEVEARSGFSQQYLSSLERGRRNPTVITLYELAQALGVSHVEL. A DNA-binding region (H-T-H motif) is located at residues 22–41; it reads QEEVEARSGFSQQYLSSLER.

This is an uncharacterized protein from Sinorhizobium fredii (strain NBRC 101917 / NGR234).